Consider the following 744-residue polypeptide: Collagen alpha-1(VIII) chain (744 aa).

The N-terminal stretch at M1–A27 is a signal peptide. Positions A29–R117 are nonhelical region (NC2). Basic and acidic residues predominate over residues K101–E110. 2 disordered regions span residues K101–Q434 and E463–Y584. The interval G118–P571 is triple-helical region. The span at P128–L137 shows a compositional bias: pro residues. The span at K168–M190 shows a compositional bias: low complexity. Residues G203–G217 show a composition bias toward gly residues. The span at K288–Q298 shows a compositional bias: pro residues. Residues G328–G337 are compositionally biased toward gly residues. Residues P389–P403 are compositionally biased toward pro residues. Gly residues predominate over residues G411 to G420. 2 stretches are compositionally biased toward low complexity: residues L469–S506 and L540–P556. Pro residues predominate over residues L558–A579. Residues A572–M744 form a nonhelical region (NC1) region. A C1q domain is found at P611–M744.

As to quaternary structure, homotrimers, or heterotrimers in association with alpha 2(VIII) type collagens. Four homotrimers can form a tetrahedron stabilized by central interacting C-terminal NC1 trimers. Prolines at the third position of the tripeptide repeating unit (G-X-Y) are hydroxylated in some or all of the chains.

It is found in the secreted. The protein localises to the extracellular space. Its subcellular location is the extracellular matrix. The protein resides in the basement membrane. Functionally, macromolecular component of the subendothelium. Major component of the Descemet's membrane (basement membrane) of corneal endothelial cells. Also a component of the endothelia of blood vessels. Necessary for migration and proliferation of vascular smooth muscle cells and thus, has a potential role in the maintenance of vessel wall integrity and structure, in particular in atherogenesis. This chain is Collagen alpha-1(VIII) chain (COL8A1), found in Gallus gallus (Chicken).